The primary structure comprises 603 residues: DNA mismatch repair protein MutL (603 aa).

The segment covering 336 to 346 has biased composition (basic and acidic residues); it reads EVSKKQKEQQK. Disordered stretches follow at residues 336-355 and 361-384; these read EVSK…MSFE and KETP…DTSR.

Belongs to the DNA mismatch repair MutL/HexB family.

This protein is involved in the repair of mismatches in DNA. It is required for dam-dependent methyl-directed DNA mismatch repair. May act as a 'molecular matchmaker', a protein that promotes the formation of a stable complex between two or more DNA-binding proteins in an ATP-dependent manner without itself being part of a final effector complex. This is DNA mismatch repair protein MutL from Listeria welshimeri serovar 6b (strain ATCC 35897 / DSM 20650 / CCUG 15529 / CIP 8149 / NCTC 11857 / SLCC 5334 / V8).